The following is a 78-amino-acid chain: Consomatin Te1 (78 aa).

The N-terminal stretch at 1–22 (MQTAYWMMVMMMVWITAPLSEG) is a signal peptide. Positions 23-56 (GQLNDVIRGLVPDNLAPQLVLQSLDSRRHPHGIR) are excised as a propeptide. Cys63 and Cys68 are joined by a disulfide. Position 65 is a D-tryptophan (Trp65). 4-hydroxyproline is present on residues Pro69, Pro70, and Pro72. Residues 74-78 (RRLGS) constitute a propeptide that is removed on maturation.

It belongs to the conotoxin C superfamily. Consomatin family. In terms of tissue distribution, expressed by the venom duct.

It is found in the secreted. Its function is as follows. Moderately activates human somatostatin receptors (SSTR) with a preferential activation of SSTR1 and SSTR4. In vivo, does not cause behavioral changes in mice within a few minutes of intracranial injection, but causes a progressive loss of movement thereafter. Four to five hours after injection, mice recover, even with the highest dose tested. Shows antinociception and antihyperalgesia activities in two mouse models of acute pain, most probably by acting outside the central nervous system. The sequence is that of Consomatin Te1 from Conus terebra (Sea snail).